The chain runs to 241 residues: Proteasome subunit alpha (241 aa).

This sequence belongs to the peptidase T1A family. As to quaternary structure, the 20S proteasome core is composed of 14 alpha and 14 beta subunits that assemble into four stacked heptameric rings, resulting in a barrel-shaped structure. The two inner rings, each composed of seven catalytic beta subunits, are sandwiched by two outer rings, each composed of seven alpha subunits. The catalytic chamber with the active sites is on the inside of the barrel. Has a gated structure, the ends of the cylinder being occluded by the N-termini of the alpha-subunits. Is capped by the proteasome-associated ATPase, ARC.

The protein resides in the cytoplasm. The protein operates within protein degradation; proteasomal Pup-dependent pathway. The formation of the proteasomal ATPase ARC-20S proteasome complex, likely via the docking of the C-termini of ARC into the intersubunit pockets in the alpha-rings, may trigger opening of the gate for substrate entry. Interconversion between the open-gate and close-gate conformations leads to a dynamic regulation of the 20S proteasome proteolysis activity. Functionally, component of the proteasome core, a large protease complex with broad specificity involved in protein degradation. The polypeptide is Proteasome subunit alpha (Frankia alni (strain DSM 45986 / CECT 9034 / ACN14a)).